The chain runs to 68 residues: Large ribosomal subunit protein bL33c (68 aa).

The protein belongs to the bacterial ribosomal protein bL33 family.

It localises to the plastid. The protein localises to the chloroplast. The sequence is that of Large ribosomal subunit protein bL33c from Amborella trichopoda.